A 367-amino-acid polypeptide reads, in one-letter code: bZIP transcription factor 18 (367 aa).

Residues 1–57 form a disordered region; it reads MEDPSNPQPNQSNLSQCPPLATAPTPAPVRGPYHRRAHSEVQFRLPEDLDLSEPFGG. Over residues 38–47 the composition is skewed to basic and acidic residues; sequence HSEVQFRLPE. Ser-70 carries the phosphoserine modification. Residues 79–124 are disordered; it reads SGSGSASDSAGPSAPRSDNPFSAENGGAEAGNSRPRHRHSLSVDGS. Low complexity predominate over residues 82–96; sequence GSASDSAGPSAPRSD. The region spanning 148-211 is the bZIP domain; sequence DPKRAKRIIA…TGLSSENTEL (64 aa). Residues 150–171 are basic motif; it reads KRAKRIIANRQSAARSKERKAR. A coiled-coil region spans residues 166–245; that stretch reads KERKARYILE…VERLKFATGE (80 aa). Residues 176 to 190 are leucine-zipper; that stretch reads LERKVQTLQTEATTL. Composition is skewed to polar residues over residues 294-309, 317-328, and 354-367; these read QPNN…NPPT, ATSNAPAQSHSY, and FGRS…SSTM. Disordered regions lie at residues 294–330 and 343–367; these read QPNN…SYSE and LDIS…SSTM.

As to quaternary structure, interacts with NEAP1. Forms homodimer and heterodimer with bZIP34 and bZIP61. In terms of tissue distribution, ubiquitous. Strongly expressed in mature pollen.

Its subcellular location is the nucleus. It localises to the nucleoplasm. The protein resides in the cytoplasm. It is found in the perinuclear region. Functionally, transcription factor that may participate with bZIP34 in the gametophytic control of pollen development. The protein is bZIP transcription factor 18 of Arabidopsis thaliana (Mouse-ear cress).